A 398-amino-acid polypeptide reads, in one-letter code: Alpha-ketoglutarate-dependent dioxygenase bsc9 (398 aa).

2 residues coordinate Fe cation: H167 and D169. A 2-oxoglutarate-binding site is contributed by T212. H365 is a Fe cation binding site. 2-oxoglutarate is bound at residue R377.

This sequence belongs to the TfdA dioxygenase family. Fe(2+) is required as a cofactor.

Its pathway is mycotoxin biosynthesis. In terms of biological role, alpha-ketoglutarate dependent dioxygenase; part of the gene cluster that mediates the biosynthesis of the diterpene glucoside brassicicene C. In the first step of the brassicicene C biosynthesis, the bifunctional diterpene synthase bsc8 that possesses both prenyl transferase and terpene cyclase activity, converts isopentenyl diphosphate and dimethylallyl diphosphate into geranylgeranyl diphosphate (GGDP) that is further converted into fusicocca-2,10(14)-diene, the first precursor for brassicicene C. Fusicocca-2,10(14)-diene is then substrate of cytochrome P450 monooxygenase bsc1 for hydroxylation at the C-8 position. Oxidation at C-16 position to aldehyde is then catalyzed by the cytochrome P450 monooyxygenase bsc7, yielding fusicocca-2,10(14)-diene-8-beta,16-diol. Follows the isomerization of the double bond and reduction of aldehyde to alcohol catalyzed by the short-chain dehydrogenase/reductase bsc3 to yield the diol compound fusicocca-1,10(14)-diene-8 beta,16-diol. The next step is the oxidation at the C-3 position of fusicocca-2,10(14)-diene-8-beta,16-diol catalyzed by the alpha-ketoglutarate dependent dioxygenase bsc9, to produce a triol compound. Methylation of the hydroxy group at position 16 is performed by the methyltransferase bsc6. 16-O-methylation is followed by oxidation at the C-13 position to ketone and an alkyl shift of the methyl group leads to brassicicene C. Although the probable acetyltransferase bsc4 is included in the gene cluster, no acetylation reactions are necessary for brassicicene C biosynthesis. However, the fact that brassicicene E, which is a structurally related compound having an acetoxy group at position 12, was previously isolated from another strain of A.brassicicola suggests that the ATCC 96836 strain might also produce a small amount of brassicicene E. This chain is Alpha-ketoglutarate-dependent dioxygenase bsc9, found in Alternaria brassicicola (Dark leaf spot agent).